Reading from the N-terminus, the 966-residue chain is Serine/threonine-protein phosphatase 6 regulatory subunit 2 (966 aa).

Position 289 is a phosphoserine (S289). 2 stretches are compositionally biased toward basic and acidic residues: residues 408 to 424 (TEAS…HENG) and 669 to 687 (GPER…HRDA). 2 disordered regions span residues 408 to 436 (TEAS…PAAS) and 657 to 707 (GAPH…VEGD). Phosphoserine occurs at positions 771 and 828. The disordered stretch occupies residues 819 to 856 (ASDSSSSGGSHSEDGDQKAASAMDAVSRGPGREAPPLP).

This sequence belongs to the SAPS family. As to quaternary structure, protein phosphatase 6 (PP6) holoenzyme is proposed to be a heterotrimeric complex formed by the catalytic subunit, a SAPS domain-containing subunit (PP6R) and an ankyrin repeat-domain containing regulatory subunit (ARS). Interacts with PPP6C and NFKBIE. Interacts with ANKRD28. In terms of tissue distribution, ubiquitously expressed with strongest expression in the testis followed by liver, heart, kidney, brain and placenta.

It localises to the cytoplasm. Its function is as follows. Regulatory subunit of protein phosphatase 6 (PP6). May function as a scaffolding PP6 subunit. Involved in the PP6-mediated dephosphorylation of NFKBIE opposing its degradation in response to TNF-alpha. This Homo sapiens (Human) protein is Serine/threonine-protein phosphatase 6 regulatory subunit 2 (PPP6R2).